The chain runs to 542 residues: MAKDIKFAENARRSLLKGVDKLADTVKTTIGPKGRNVVLEQSYGNPDITNDGVTIAKSIELKDHYENMGAKLVAEAAQKTNDIAGDGTTTATVLTQAIAREGMKNVTAGANPVGIRRGIEKATKAAVDELHKISHKVESKEQIANVAAVSSASKEVGELIADAMEKVGHDGVITIEDSRGINTELSVVEGMQFDRGYLSQYMVTDNDKMEADLDNPYILITDKKISNIQDILPLLQEIVQQGKSLLIIADDVTGEALPTLVLNKIRGTFNVVAVKAPGFGDRRKAQLEDIAALTGGTVITDDLGFELKDTKIDQLGQARRVTVTKDSTTIVDGAGSKDAIKEREDSIRKQIEESTSDFDKKKLQERLAKLTGGVAVIHVGAATETELKERRYRIEDALNSTRAAVDEGYVAGGGTALVDVEKAIKDLKGETSDEQTGINIVLRALSAPVRQIAENAGKDGAVVLNKLESQENEIGYNAATDKWENMVEAGIIDPTKVTRTALQNAASIAALLLTTEAVVADIPEDKPEAPQAGAAGAPGMGM.

Residues 29–32 (TIGP), 86–90 (DGTTT), G413, 477–479 (NAA), and D493 each bind ATP.

This sequence belongs to the chaperonin (HSP60) family. As to quaternary structure, forms a cylinder of 14 subunits composed of two heptameric rings stacked back-to-back. Interacts with the co-chaperonin GroES.

The protein localises to the cytoplasm. It carries out the reaction ATP + H2O + a folded polypeptide = ADP + phosphate + an unfolded polypeptide.. Together with its co-chaperonin GroES, plays an essential role in assisting protein folding. The GroEL-GroES system forms a nano-cage that allows encapsulation of the non-native substrate proteins and provides a physical environment optimized to promote and accelerate protein folding. The protein is Chaperonin GroEL of Lactobacillus acidophilus (strain ATCC 700396 / NCK56 / N2 / NCFM).